A 719-amino-acid polypeptide reads, in one-letter code: ATP-dependent RNA helicase SUV3 homolog, mitochondrial (719 aa).

A mitochondrion-targeting transit peptide spans 1–18 (MRRASGVLRVLGGLTQRC). A disordered region spans residues 16–42 (QRCSTSSTPSSSRFPAMNSRRKRNSVR). Positions 181–319 (EARSVTRKIF…PAAIDIVKKL (139 aa)) constitute a Helicase ATP-binding domain. ATP is bound at residue 194–201 (GPTNSGKT). Positions 343 to 499 (KAIESYSNIE…PTYDQIETFS (157 aa)) constitute a Helicase C-terminal domain. The segment at 662 to 692 (SKAAGSSKSSEGKRENPSKSEREKPNKRSSI) is disordered. Over residues 671-687 (SEGKRENPSKSEREKPN) the composition is skewed to basic and acidic residues. The stretch at 693 to 717 (LEALLKRADISEDDLEQLREELNKN) forms a coiled coil.

This sequence belongs to the helicase family. It depends on Mg(2+) as a cofactor. Mn(2+) is required as a cofactor.

It localises to the mitochondrion matrix. The protein resides in the nucleus. The enzyme catalyses ATP + H2O = ADP + phosphate + H(+). Its function is as follows. ATPase and DNA/RNA helicase able to unwind DNA/DNA, DNA/RNA and RNA/RNA duplexes in the 5'-3' direction. The chain is ATP-dependent RNA helicase SUV3 homolog, mitochondrial from Caenorhabditis elegans.